The sequence spans 437 residues: Eukaryotic peptide chain release factor subunit 1 (437 aa).

The NIKS motif; plays an important role in translational termination signature appears at 61-64; sequence NIKS.

It belongs to the eukaryotic release factor 1 family. Component of the eRF1-eRF3-GTP ternary complex, composed of ETF1/ERF1 and eRF3 (GSPT1/ERF3A or GSPT2/ERF3B) and GTP.

The protein resides in the cytoplasm. Component of the eRF1-eRF3-GTP ternary complex, a ternary complex that mediates translation termination in response to the termination codons. The eRF1-eRF3-GTP complex binds to a stop codon in the ribosomal A-site. ETF1/ERF1 is responsible for stop codon recognition and inducing hydrolysis of peptidyl-tRNA. Following GTP hydrolysis, eRF3 (GSPT1/ERF3A or GSPT2/ERF3B) dissociates, permitting ETF1/eRF1 to accommodate fully in the A-site, followed by hydrolysis of peptidyl-tRNA. This Xenopus laevis (African clawed frog) protein is Eukaryotic peptide chain release factor subunit 1 (etf1).